Here is a 156-residue protein sequence, read N- to C-terminus: Arginine repressor (156 aa).

Belongs to the ArgR family.

The protein localises to the cytoplasm. It participates in amino-acid biosynthesis; L-arginine biosynthesis [regulation]. Functionally, regulates arginine biosynthesis genes. The polypeptide is Arginine repressor (Shewanella oneidensis (strain ATCC 700550 / JCM 31522 / CIP 106686 / LMG 19005 / NCIMB 14063 / MR-1)).